Here is a 285-residue protein sequence, read N- to C-terminus: 2-dehydro-3-deoxyphosphooctonate aldolase (285 aa).

Belongs to the KdsA family.

It is found in the cytoplasm. The enzyme catalyses D-arabinose 5-phosphate + phosphoenolpyruvate + H2O = 3-deoxy-alpha-D-manno-2-octulosonate-8-phosphate + phosphate. It functions in the pathway carbohydrate biosynthesis; 3-deoxy-D-manno-octulosonate biosynthesis; 3-deoxy-D-manno-octulosonate from D-ribulose 5-phosphate: step 2/3. Its pathway is bacterial outer membrane biogenesis; lipopolysaccharide biosynthesis. The chain is 2-dehydro-3-deoxyphosphooctonate aldolase from Acinetobacter baumannii (strain SDF).